The chain runs to 35 residues: Unknown protein 14 from 2D-PAGE (35 aa).

The disordered stretch occupies residues 1-35; that stretch reads VVXXQTLXDXRGIYGDQGSIGPXXIXGLQGDRDAD.

In Bombyx mori (Silk moth), this protein is Unknown protein 14 from 2D-PAGE.